Here is a 122-residue protein sequence, read N- to C-terminus: Small ribosomal subunit protein uS13 (122 aa).

Residues 95-122 form a disordered region; that stretch reads NLPVRGQRTHTNARTRKGKAKPIAGKKK.

This sequence belongs to the universal ribosomal protein uS13 family. In terms of assembly, part of the 30S ribosomal subunit. Forms a loose heterodimer with protein S19. Forms two bridges to the 50S subunit in the 70S ribosome.

Its function is as follows. Located at the top of the head of the 30S subunit, it contacts several helices of the 16S rRNA. In the 70S ribosome it contacts the 23S rRNA (bridge B1a) and protein L5 of the 50S subunit (bridge B1b), connecting the 2 subunits; these bridges are implicated in subunit movement. Contacts the tRNAs in the A and P-sites. The polypeptide is Small ribosomal subunit protein uS13 (Methylobacterium sp. (strain 4-46)).